The chain runs to 255 residues: 5-oxoprolinase subunit A (255 aa).

The protein belongs to the LamB/PxpA family. Forms a complex composed of PxpA, PxpB and PxpC.

The catalysed reaction is 5-oxo-L-proline + ATP + 2 H2O = L-glutamate + ADP + phosphate + H(+). Functionally, catalyzes the cleavage of 5-oxoproline to form L-glutamate coupled to the hydrolysis of ATP to ADP and inorganic phosphate. This Thermococcus onnurineus (strain NA1) protein is 5-oxoprolinase subunit A.